The chain runs to 38 residues: Histone H5 (38 aa).

Residues 1–15 (TESPIPVPAPAPAAK) show a composition bias toward pro residues. A disordered region spans residues 1-38 (TESPIPVPAPAPAAKPKPKRVSKRPASHPPYSDMIAAA). Basic residues predominate over residues 16 to 26 (PKPKRVSKRPA).

This sequence belongs to the histone H1/H5 family. In terms of tissue distribution, erythroid cells.

It localises to the nucleus. The protein localises to the chromosome. In terms of biological role, histone H5 performs the same function as H1, being necessary for the condensation of nucleosome chains into higher order structures, and replaces histone H1 in certain cells. This is Histone H5 from Columba livia (Rock dove).